The chain runs to 334 residues: Phosphate acyltransferase (334 aa).

This sequence belongs to the PlsX family. Homodimer. Probably interacts with PlsY.

It localises to the cytoplasm. The catalysed reaction is a fatty acyl-[ACP] + phosphate = an acyl phosphate + holo-[ACP]. It participates in lipid metabolism; phospholipid metabolism. In terms of biological role, catalyzes the reversible formation of acyl-phosphate (acyl-PO(4)) from acyl-[acyl-carrier-protein] (acyl-ACP). This enzyme utilizes acyl-ACP as fatty acyl donor, but not acyl-CoA. The sequence is that of Phosphate acyltransferase from Acholeplasma laidlawii (strain PG-8A).